The chain runs to 217 residues: Non-structural protein NS3 (217 aa).

Belongs to the orbivirus NS3 family.

Functionally, may play a role in the release of virions from infected cells. In Camelus dromedarius (Dromedary), this protein is Non-structural protein NS3 (Segment-10).